The chain runs to 1067 residues: Tricorn protease homolog 1 (1067 aa).

The segment at Thr-518–Ile-551 is disordered. Over residues Arg-530–Thr-540 the composition is skewed to basic and acidic residues. The Charge relay system role is filled by His-740. Residues Arg-754 to Glu-851 form a PDZ-like region. Gly-914 lines the substrate pocket. Residue Ser-961 is the Nucleophile of the active site. The Charge relay system role is filled by Glu-1019.

Belongs to the peptidase S41B family. Forms a homohexameric complex; it is not known if it assembles into higher-order structures.

It localises to the cytoplasm. Its activity is regulated as follows. Stimulated by MgCl2. Degrades oligopeptides in a sequential manner. The protein is Tricorn protease homolog 1 (tri1) of Streptomyces coelicolor (strain ATCC BAA-471 / A3(2) / M145).